A 440-amino-acid polypeptide reads, in one-letter code: MGKLHSKHAAICKARESPEGDSFVVNACLARKGLDDWMVKQKYYCSSSRVDQRDCQQKNNCELSPRDPLDEGYAEGISDEHYRLEVALPPEKTDSCSVEERMQGTEGSATVGPHKQLQFEELECAVSVEEDNRQEWTFTLYDFDNNGKVTREDITSLLHTIYEVVDASVNHSPSSSKTLRVKLSVAPDSSQRWKNCTQTNTDTPNPKHKGEKCIEDSKTSEKKSRAFLRRYHAEHHSQQGCQRHCVDENLERRNHYLDLAGIENYTSRFGTAAPATEPAKPTHATRSSNQSRSRSQEPENGQVHPAHHRRSQTMSTDPPAILTRHTHALRSPKTHRTPPTQASAGRVMRRGAPPPPSVPNQTPPHQSSGPYRRHKQRPKEALHYRALGPSVTSGPVLEKEHVRDLPSLVLYEGGLAQVVQRHEHHHHHEHHHHYHHFYQS.

A lipid anchor (N-myristoyl glycine) is attached at Gly-2. Residues 129–164 (EEDNRQEWTFTLYDFDNNGKVTREDITSLLHTIYEV) enclose the EF-hand domain. 5 residues coordinate Ca(2+): Asp-142, Asp-144, Asn-146, Lys-148, and Asp-153. A compositionally biased stretch (polar residues) spans 192–204 (RWKNCTQTNTDTP). Disordered stretches follow at residues 192–221 (RWKN…KTSE), 272–379 (AAPA…QRPK), and 421–440 (RHEH…FYQS). A compositionally biased stretch (basic and acidic residues) spans 211 to 221 (EKCIEDSKTSE). Residues 272-293 (AAPATEPAKPTHATRSSNQSRS) are compositionally biased toward low complexity. The segment covering 324-336 (RHTHALRSPKTHR) has biased composition (basic residues). The span at 352–362 (APPPPSVPNQT) shows a compositional bias: pro residues. Positions 422-440 (HEHHHHHEHHHHYHHFYQS) are enriched in basic residues.

It belongs to the NKD family.

The protein resides in the cell membrane. It is found in the cytoplasm. Its function is as follows. Cell autonomous antagonist of the canonical Wnt signaling pathway. May activate a second Wnt signaling pathway that controls planar cell polarity. The polypeptide is Protein naked cuticle homolog 1 (nkd1) (Danio rerio (Zebrafish)).